We begin with the raw amino-acid sequence, 1043 residues long: Ras guanine nucleotide exchange factor S (1043 aa).

Residues 109 to 142 (IETLQTQRRQSTLNIQALQINNELQQQLQQQQQL) adopt a coiled-coil conformation. 4 stretches are compositionally biased toward low complexity: residues 135 to 145 (QLQQQQQLPPI), 245 to 258 (LSPL…GLSS), 266 to 281 (SKNQ…NSSS), and 293 to 307 (NNNN…SNSS). 2 disordered regions span residues 135 to 160 (QLQQ…TSTI) and 245 to 316 (LSPL…HQSQ). The stretch at 404–434 (LAVSLQNVEGLQNIAENLEDETLNLLDLVNE) forms a coiled coil. Residues 645-768 (KDGSILKVTL…LLRGLLDKMI (124 aa)) enclose the N-terminal Ras-GEF domain. One can recognise a Ras-GEF domain in the interval 803–1043 (SAQSIAQQLT…YDLSIALEPK (241 aa)).

Functionally, promotes the exchange of Ras-bound GDP by GTP. This is Ras guanine nucleotide exchange factor S (gefS) from Dictyostelium discoideum (Social amoeba).